The chain runs to 126 residues: MLTFAPLNFLAIGVGATLGAWLRWVPGLRLNGAGWPWGTLTANLVGGYLIGVMVALIASHPEWPAWIRLAAVTGFLGGLTTFSTFSAETVDMLERGVYATAAAYAGASLAGSLAMTGLATVRLLLR.

Helical transmembrane passes span 2 to 22 (LTFAPLNFLAIGVGATLGAWL), 37 to 57 (WGTLTANLVGGYLIGVMVALI), 65 to 85 (AWIRLAAVTGFLGGLTTFSTF), and 101 to 121 (AAAYAGASLAGSLAMTGLATV). Residues glycine 77 and threonine 80 each contribute to the Na(+) site.

This sequence belongs to the fluoride channel Fluc/FEX (TC 1.A.43) family.

The protein resides in the cell inner membrane. It catalyses the reaction fluoride(in) = fluoride(out). With respect to regulation, na(+) is not transported, but it plays an essential structural role and its presence is essential for fluoride channel function. Its function is as follows. Fluoride-specific ion channel. Important for reducing fluoride concentration in the cell, thus reducing its toxicity. This is Fluoride-specific ion channel FluC from Bordetella parapertussis (strain 12822 / ATCC BAA-587 / NCTC 13253).